The following is an 807-amino-acid chain: MFCRKYVFQTWKQLSRSYSTVNSIGAAKTRNIGIIAHIDAGKTTTTERMIYYSGRTKRIGNVDEGDTVTDYLPSERERGITIQSAAITLPWNQHKINIIDTPGHADFTFEVIRSLRVLDGAVTILDAVAGVEAQTEKVWKQASALNLPKVVYVNKMDRPGAGFSRTVQEVIQKLETRVVLCNLPYFETNKESDLEFKGVIDVIHQKLLKWNETDANGNEISVVNIDETTPDLLQILEKSRESMVETLGEYDERIIDSFLEHDENYLKIPPMLLDQVIRKATIDNYLTPVFCGASFRNIGVQPLMDGITKYLPSPLETSLPQITKNGKDVTKKVDGEKGLVVANDNNLTLALAFKVMTHSTRGPMTFVRVYSGKLNAASNLINTRTGKKLLIRKLLVMHGDSPEEVKSISAGNIGVIPGYETDFQTGDTLVSSAVAKRNFTAKDSAYRLLPIDIPPPLFNAAIEPHTAGDEAYMKQCVETLIREDPSLKVHLDKEMGQVVLSGMGELHLDIVRERLVNDMKAKVNLKDVVVSYKESFVGKREKEAVITNEEIEVAVTLSHIEDARDYVGQEGALVIEEDNNVILLSETASSEHVRATIDERRWKCENNLEELKEAILNGCLTALQMGGPILGFPLHSTLVTVNRWNVPVEVAQEQALNLMNASRQAVQSLKDEKKDFSILEPIMSTKVYVDSNDLGEVSHDLTQRCKAMIVEIQDQSTQNLETAAWAKDEAAKVYVPPDYTIKKNVSKFDDIANKKIIVAETPLREMIGYLSKLRALTRGRATFDMTLIGMRRAVGNRVDSIVEEYKF.

Residues Met1–Tyr18 constitute a mitochondrion transit peptide. One can recognise a tr-type G domain in the interval Ala27–Leu315. Residues Ala36–Thr43, Asp100–His104, and Asn154–Asp157 each bind GTP.

The protein belongs to the TRAFAC class translation factor GTPase superfamily. Classic translation factor GTPase family. EF-G/EF-2 subfamily.

It is found in the mitochondrion. In terms of biological role, mitochondrial GTPase that mediates the disassembly of ribosomes from messenger RNA at the termination of mitochondrial protein biosynthesis. Not involved in the GTP-dependent ribosomal translocation step during translation elongation. The chain is Ribosome-releasing factor 2, mitochondrial from Candida albicans (strain SC5314 / ATCC MYA-2876) (Yeast).